The chain runs to 494 residues: MLELPIISITIFLPLISVLYILLFISQSKKPDKQIHTMYVAVLSSVLTFISTIYILIEFDSSNPTYQFVERYSWLDKIGLEFHVGIDGISIFFVSLTSFLTLICIIGSLFTVKKYIKEYLVCFLLMESFCIGAFTSINLLVFYLFFEVILVPMYIIIGVWGGENRIYAAVKFFLYTFFGSVFFLLSIIYIYSKIHSFDLSNIGEFTNNFPLHVQQILWWAIFIAFAIKIPMIPFHTWLPDAHVQAPTSGSVILAGILLKLGGYGFLRVLLPLLPNASQEFAIYVIWLSVIAIIYASLVALAQKDMKKMIAYSSITHMGYVTIGIFSFTDSGVSGALFQMLSHGIISSCLFLIVGTLYERLHTKEIAKYGGVASKMPVLATFFMIAMLGSVGLPGTSGFIGEFLSLLGIYKVNVIATFLAALGIILGAIYMLKLYKEVMLGEITNKEIINFRDLYIYEIISIAPLILLIIYFGLMPSSILNVFHLSVENLLVKFF.

14 consecutive transmembrane segments (helical) span residues 5-25 (PIIS…LLFI), 37-57 (TMYV…YILI), 89-109 (ISIF…IGSL), 115-135 (YIKE…GAFT), 139-159 (LLVF…IIGV), 172-192 (FFLY…YIYS), 216-236 (ILWW…PFHT), 251-271 (VILA…VLLP), 280-300 (FAIY…LVAL), 308-328 (MIAY…FSFT), 334-354 (GALF…LIVG), 375-395 (MPVL…LPGT), 411-431 (VNVI…IYML), and 458-478 (IISI…PSSI).

The protein belongs to the complex I subunit 4 family.

It localises to the cell membrane. It catalyses the reaction a quinone + NADH + 5 H(+)(in) = a quinol + NAD(+) + 4 H(+)(out). NDH-1 shuttles electrons from NADH, via FMN and iron-sulfur (Fe-S) centers, to quinones in the respiratory chain. Couples the redox reaction to proton translocation (for every two electrons transferred, four hydrogen ions are translocated across the cytoplasmic membrane), and thus conserves the redox energy in a proton gradient. This is NADH-quinone oxidoreductase subunit M (nuoM) from Rickettsia bellii (strain RML369-C).